The sequence spans 461 residues: Phosphoglucosamine mutase (461 aa).

The active-site Phosphoserine intermediate is the S113. S113, D251, D253, and D255 together coordinate Mg(2+). S113 bears the Phosphoserine mark.

It belongs to the phosphohexose mutase family. It depends on Mg(2+) as a cofactor. In terms of processing, activated by phosphorylation.

It catalyses the reaction alpha-D-glucosamine 1-phosphate = D-glucosamine 6-phosphate. Its function is as follows. Catalyzes the conversion of glucosamine-6-phosphate to glucosamine-1-phosphate. This chain is Phosphoglucosamine mutase, found in Prochlorococcus marinus (strain SARG / CCMP1375 / SS120).